A 190-amino-acid polypeptide reads, in one-letter code: Threonylcarbamoyl-AMP synthase (190 aa).

The YrdC-like domain occupies 7–190 (GDAIAAAIDV…ALTGELFRQG (184 aa)).

This sequence belongs to the SUA5 family. TsaC subfamily.

The protein localises to the cytoplasm. It catalyses the reaction L-threonine + hydrogencarbonate + ATP = L-threonylcarbamoyladenylate + diphosphate + H2O. Functionally, required for the formation of a threonylcarbamoyl group on adenosine at position 37 (t(6)A37) in tRNAs that read codons beginning with adenine. Catalyzes the conversion of L-threonine, HCO(3)(-)/CO(2) and ATP to give threonylcarbamoyl-AMP (TC-AMP) as the acyladenylate intermediate, with the release of diphosphate. In Escherichia coli O6:H1 (strain CFT073 / ATCC 700928 / UPEC), this protein is Threonylcarbamoyl-AMP synthase.